The chain runs to 195 residues: PAP fimbrial minor pilin protein (195 aa).

The first 22 residues, 1 to 22, serve as a signal peptide directing secretion; it reads MRLRFSVPLFFFGCVFVHGVFA. Cysteine 58 and cysteine 97 form a disulfide bridge.

It belongs to the fimbrial protein family.

It is found in the secreted. It localises to the fimbrium. Fimbriae (also called pili), polar filaments radiating from the surface of the bacterium to a length of 0.5-1.5 micrometers and numbering 100-300 per cell, enable bacteria to colonize the epithelium of specific host organs. In terms of biological role, papH seems to anchor the pilus to the bacterial cell. In addition the stoichiometric relationship between PapH and PapA determines the pilus length. The chain is PAP fimbrial minor pilin protein (papH) from Escherichia coli.